A 328-amino-acid chain; its full sequence is uncharacterized protein (328 aa).

Residues Leu-37–Ile-179 form the SIS domain. Gly-52–Gly-57 serves as a coordination point for ATP. CBS domains lie at Leu-205–Ile-264 and Met-273–Leu-328.

It belongs to the SIS family. GutQ/KpsF subfamily.

This is an uncharacterized protein from Chlamydia muridarum (strain MoPn / Nigg).